Consider the following 473-residue polypeptide: Photosystem II CP43 reaction center protein (473 aa).

A propeptide spanning residues 1–14 is cleaved from the precursor; that stretch reads MKTLYSLRRFYHVE. N-acetylthreonine is present on Thr-15. At Thr-15 the chain carries Phosphothreonine. 5 consecutive transmembrane segments (helical) span residues 69 to 93, 134 to 155, 178 to 200, 255 to 275, and 291 to 312; these read LFEVAHFVPEKPMYEQGLILLPHLA, LLGPETLEESFPFFGYVWKDRN, KALYFGGVYDTWAPGGGDVRKIT, KPFAWARRALVWSGEAYLSYS, and WFNNTAYPSEFYGPTGPEASQA. A [CaMn4O5] cluster-binding site is contributed by Glu-367. Residues 447–471 traverse the membrane as a helical segment; sequence RARAAAAGFEKGIDRDFEPVLFMTP.

It belongs to the PsbB/PsbC family. PsbC subfamily. PSII is composed of 1 copy each of membrane proteins PsbA, PsbB, PsbC, PsbD, PsbE, PsbF, PsbH, PsbI, PsbJ, PsbK, PsbL, PsbM, PsbT, PsbX, PsbY, PsbZ, Psb30/Ycf12, at least 3 peripheral proteins of the oxygen-evolving complex and a large number of cofactors. It forms dimeric complexes. Binds multiple chlorophylls and provides some of the ligands for the Ca-4Mn-5O cluster of the oxygen-evolving complex. It may also provide a ligand for a Cl- that is required for oxygen evolution. PSII binds additional chlorophylls, carotenoids and specific lipids. is required as a cofactor.

The protein resides in the plastid. The protein localises to the chloroplast thylakoid membrane. One of the components of the core complex of photosystem II (PSII). It binds chlorophyll and helps catalyze the primary light-induced photochemical processes of PSII. PSII is a light-driven water:plastoquinone oxidoreductase, using light energy to abstract electrons from H(2)O, generating O(2) and a proton gradient subsequently used for ATP formation. The sequence is that of Photosystem II CP43 reaction center protein from Solanum tuberosum (Potato).